The sequence spans 783 residues: Protein transport protein SEC23 B (783 aa).

Cys59, Cys62, Cys81, and Cys84 together coordinate Zn(2+). The tract at residues 59–84 (CRICTAALNPFARVDFLAKIWICPIC) is zinc finger-like.

Belongs to the SEC23/SEC24 family. SEC23 subfamily. As to quaternary structure, component of the coat protein complex II (COPII), composed of at least five proteins: the Sec23/24 complex, the Sec13/31 complex and Sar1. Interacts with SEC24A.

It is found in the cytoplasmic vesicle. The protein localises to the COPII-coated vesicle membrane. Its subcellular location is the endoplasmic reticulum membrane. The protein resides in the membrane. In terms of biological role, component of the coat protein complex II (COPII) which promotes the formation of transport vesicles from the endoplasmic reticulum (ER). The coat has two main functions, the physical deformation of the endoplasmic reticulum membrane into vesicles and the selection of cargo molecules. The protein is Protein transport protein SEC23 B of Arabidopsis thaliana (Mouse-ear cress).